Here is a 482-residue protein sequence, read N- to C-terminus: UDP-N-acetylmuramate--L-alanine ligase (482 aa).

Residue 115–121 (GTHGKTT) coordinates ATP.

This sequence belongs to the MurCDEF family.

It is found in the cytoplasm. The enzyme catalyses UDP-N-acetyl-alpha-D-muramate + L-alanine + ATP = UDP-N-acetyl-alpha-D-muramoyl-L-alanine + ADP + phosphate + H(+). It functions in the pathway cell wall biogenesis; peptidoglycan biosynthesis. In terms of biological role, cell wall formation. This Rhodospirillum centenum (strain ATCC 51521 / SW) protein is UDP-N-acetylmuramate--L-alanine ligase.